The following is a 438-amino-acid chain: Trigger factor (438 aa).

In terms of domain architecture, PPIase FKBP-type spans 162 to 247; sequence GDRVNINYQG…LNKVEAPKLP (86 aa).

This sequence belongs to the FKBP-type PPIase family. Tig subfamily.

It localises to the cytoplasm. It carries out the reaction [protein]-peptidylproline (omega=180) = [protein]-peptidylproline (omega=0). Involved in protein export. Acts as a chaperone by maintaining the newly synthesized protein in an open conformation. Functions as a peptidyl-prolyl cis-trans isomerase. This Nitrosomonas eutropha (strain DSM 101675 / C91 / Nm57) protein is Trigger factor.